We begin with the raw amino-acid sequence, 261 residues long: tRNA pseudouridine synthase A (261 aa).

Asp55 serves as the catalytic Nucleophile. Tyr114 contacts substrate.

This sequence belongs to the tRNA pseudouridine synthase TruA family. In terms of assembly, homodimer.

The enzyme catalyses uridine(38/39/40) in tRNA = pseudouridine(38/39/40) in tRNA. Its function is as follows. Formation of pseudouridine at positions 38, 39 and 40 in the anticodon stem and loop of transfer RNAs. In Paracoccus denitrificans (strain Pd 1222), this protein is tRNA pseudouridine synthase A.